The sequence spans 2302 residues: Phosphatidylinositol phosphatase PTPRQ (2302 aa).

The N-terminal stretch at 1–18 (MMDFHFSFLFLLIGTSES) is a signal peptide. Residues 19–1908 (QVDVSSSFDG…GEGLSERTVE (1890 aa)) are Extracellular-facing. Asn-54 carries N-linked (GlcNAc...) asparagine glycosylation. 17 consecutive Fibronectin type-III domains span residues 60–155 (PPVF…TAES), 159–254 (KVVN…SSST), 310–398 (PPQN…PPDV), 401–501 (AVFD…PHND), 474–566 (GFYE…TVRT), 570–665 (VPSS…TPED), 670–759 (SPQD…TSET), 764–854 (APEN…TEED), 859–948 (PPQN…TPEG), 953–1053 (PPND…TDQD), 1058–1151 (PVGN…TEED), 1156–1243 (PPII…TDES), 1248–1341 (PPQN…TQES), 1345–1431 (AVRN…LPET), 1435–1539 (APTN…TLPG), 1544–1642 (PPEN…TLES), and 1647–1748 (PPNN…IKAP). Residues Asn-162, Asn-169, Asn-318, Asn-354, and Asn-389 are each glycosylated (N-linked (GlcNAc...) asparagine). Asn-733 and Asn-746 each carry an N-linked (GlcNAc...) asparagine glycan. Asn-904, Asn-998, Asn-1010, and Asn-1040 each carry an N-linked (GlcNAc...) asparagine glycan. N-linked (GlcNAc...) asparagine glycans are attached at residues Asn-1251 and Asn-1256. Residue Asn-1805 is glycosylated (N-linked (GlcNAc...) asparagine). A helical membrane pass occupies residues 1909 to 1929 (IILSVTLCILSIILLGTAIFA). Over 1930–2302 (FVRIRQKQKE…VELEWEETTM (373 aa)) the chain is Cytoplasmic. The Tyrosine-protein phosphatase domain occupies 2006-2262 (FQEEFSELPK…IFLHQCILDL (257 aa)). The Phosphocysteine intermediate role is filled by Cys-2203.

It belongs to the protein-tyrosine phosphatase family. Receptor class 2A subfamily. Interacts with TPRN. TPRN, CLIC5 and PTPQR form concentric rings at the base of stereocilia and may form a complex.

Its subcellular location is the cell projection. The protein resides in the stereocilium. It localises to the apical cell membrane. It is found in the basal cell membrane. The enzyme catalyses a 1,2-diacyl-sn-glycero-3-phospho-(1D-myo-inositol-3,4,5-trisphosphate) + H2O = a 1,2-diacyl-sn-glycero-3-phospho-(1D-myo-inositol-4,5-bisphosphate) + phosphate. It catalyses the reaction a 1,2-diacyl-sn-glycero-3-phospho-(1D-myo-inositol-3,4,5-trisphosphate) + H2O = a 1,2-diacyl-sn-glycero-3-phospho-(1D-myo-inositol-3,4-bisphosphate) + phosphate. It carries out the reaction a 1,2-diacyl-sn-glycero-3-phospho-(1D-myo-inositol-3,5-bisphosphate) + H2O = a 1,2-diacyl-sn-glycero-3-phospho-(1D-myo-inositol-5-phosphate) + phosphate. The catalysed reaction is a 1,2-diacyl-sn-glycero-3-phospho-(1D-myo-inositol-3,5-bisphosphate) + H2O = a 1,2-diacyl-sn-glycero-3-phospho-(1D-myo-inositol-3-phosphate) + phosphate. The enzyme catalyses a 1,2-diacyl-sn-glycero-3-phospho-(1D-myo-inositol-4,5-bisphosphate) + H2O = a 1,2-diacyl-sn-glycero-3-phospho-(1D-myo-inositol 4-phosphate) + phosphate. Functionally, dephosphorylates phosphatidylinositol phosphates, such as phosphatidylinositol 3,4,5-trisphosphate (PIP3) and phosphatidylinositol 3,5-diphosphates, with preference for PIP3. Phosphate can be hydrolyzed from the D3 and D5 positions in the inositol ring. Has low tyrosine-protein phosphatase activity in vitro; however, the relevance of such activity in vivo is unclear. Plays an important role in adipogenesis of mesenchymal stem cells (MSCs). Regulates the phosphorylation state of AKT1 by regulating the levels of PIP3 level in MSCs and preadipocyte cells. Required for hair bundle maturation, a process that enables hair cells to detect and transmit sound and balance signals effectively, therefore affecting auditory function. May act by regulating the level of phosphatidylinositol 4,5-bisphosphate (PIP2) level in the basal region of hair bundles. In Rattus norvegicus (Rat), this protein is Phosphatidylinositol phosphatase PTPRQ (Ptprq).